A 263-amino-acid chain; its full sequence is Acetylglutamate kinase (263 aa).

Residues 48 to 49 (GG), Arg70, and Asn162 contribute to the substrate site.

This sequence belongs to the acetylglutamate kinase family. ArgB subfamily.

The protein resides in the cytoplasm. The catalysed reaction is N-acetyl-L-glutamate + ATP = N-acetyl-L-glutamyl 5-phosphate + ADP. Its pathway is amino-acid biosynthesis; L-arginine biosynthesis; N(2)-acetyl-L-ornithine from L-glutamate: step 2/4. Catalyzes the ATP-dependent phosphorylation of N-acetyl-L-glutamate. The sequence is that of Acetylglutamate kinase from Vibrio vulnificus (strain YJ016).